The sequence spans 351 residues: MSSLSPELYGCLGNSGLKVSKLILGCMSYGKKEYWEDWVLEDEEEVFKIMKAAYDAGIRTFDTANCYSAGVSEELVGKFIRKYEIPRSSIVILSKCFFPVRKDLIKIFGDLSSRGVHFLDSPELANQCGLSRKHIFDAVEDSVKRLGTYIDVLQIHRYDPHVSAEEVMRALNDVVESGKVRYIGASTMRCYQFIELQNTAEKHGWHKFISMQNYHNLLYREEEREMIPYCQKTGVGLIPWSPLARGLLTRSIDANEETIRSKTDLYTRALEFGAGYKAILSRVEELAKKYNVSMATLATAWSLHKGDYPIVGISKVERLKDALAAVELKLSEEDIKYLEEPYCPVPIQGEI.

Serine 113 carries the post-translational modification Phosphoserine.

This sequence belongs to the aldo/keto reductase family. Aldo/keto reductase 2 subfamily.

It localises to the cytoplasm. Its subcellular location is the nucleus. This chain is Putative aryl-alcohol dehydrogenase C977.14c, found in Schizosaccharomyces pombe (strain 972 / ATCC 24843) (Fission yeast).